Here is a 226-residue protein sequence, read N- to C-terminus: Phosphoribosylformylglycinamidine synthase subunit PurQ (226 aa).

One can recognise a Glutamine amidotransferase type-1 domain in the interval 3–225 (FAVIVFPGSN…VKWGARHVTY (223 aa)). The Nucleophile role is filled by Cys-86. Active-site residues include His-194 and Glu-196.

As to quaternary structure, part of the FGAM synthase complex composed of 1 PurL, 1 PurQ and 2 PurS subunits.

Its subcellular location is the cytoplasm. The catalysed reaction is N(2)-formyl-N(1)-(5-phospho-beta-D-ribosyl)glycinamide + L-glutamine + ATP + H2O = 2-formamido-N(1)-(5-O-phospho-beta-D-ribosyl)acetamidine + L-glutamate + ADP + phosphate + H(+). It carries out the reaction L-glutamine + H2O = L-glutamate + NH4(+). The protein operates within purine metabolism; IMP biosynthesis via de novo pathway; 5-amino-1-(5-phospho-D-ribosyl)imidazole from N(2)-formyl-N(1)-(5-phospho-D-ribosyl)glycinamide: step 1/2. Part of the phosphoribosylformylglycinamidine synthase complex involved in the purines biosynthetic pathway. Catalyzes the ATP-dependent conversion of formylglycinamide ribonucleotide (FGAR) and glutamine to yield formylglycinamidine ribonucleotide (FGAM) and glutamate. The FGAM synthase complex is composed of three subunits. PurQ produces an ammonia molecule by converting glutamine to glutamate. PurL transfers the ammonia molecule to FGAR to form FGAM in an ATP-dependent manner. PurS interacts with PurQ and PurL and is thought to assist in the transfer of the ammonia molecule from PurQ to PurL. In Exiguobacterium sp. (strain ATCC BAA-1283 / AT1b), this protein is Phosphoribosylformylglycinamidine synthase subunit PurQ.